The sequence spans 155 residues: UPF0260 protein NGR_c07710 (155 aa).

This sequence belongs to the UPF0260 family.

The chain is UPF0260 protein NGR_c07710 from Sinorhizobium fredii (strain NBRC 101917 / NGR234).